Reading from the N-terminus, the 794-residue chain is Ent-copalyl diphosphate synthase 2 (794 aa).

A chloroplast-targeting transit peptide spans 1–35; sequence MSSSSNVTSLPRLTTAGGVFPREMVRVHSSCNILR. Residue lysine 238 participates in substrate binding. Aspartate 369 and aspartate 371 together coordinate Mg(2+). Positions 369–372 match the DXDD motif motif; that stretch reads DVDD. Lysine 455 lines the substrate pocket.

This sequence belongs to the terpene synthase family. Tpsc subfamily. It depends on Mg(2+) as a cofactor. Expressed in leaves.

It localises to the plastid. The protein localises to the chloroplast. The enzyme catalyses (2E,6E,10E)-geranylgeranyl diphosphate = ent-copalyl diphosphate. The protein operates within secondary metabolite biosynthesis; terpenoid biosynthesis. Involved in the biosynthesis of ent-kaurene diterpenoids natural products such as oridonin, miltiradiene, eriocalyxin B and nezukol, known to exhibit antitumor, anti-inflammatory and antibacterial activities. Catalyzes the conversion of (2E,6E,10E)-geranylgeranyl diphosphate (GGPP) to ent-copalyl diphosphate (ent-CPP). The protein is Ent-copalyl diphosphate synthase 2 of Isodon eriocalyx (Plectranthus eriocalyx).